We begin with the raw amino-acid sequence, 107 residues long: Guanylate cyclase activator 2B (107 aa).

The N-terminal stretch at 1–21 (MSGSQLWAAVVVLLLLQSAQG) is a signal peptide. The propeptide occupies 22 to 92 (VYIKYHGFQV…STFKALRTIA (71 aa)). Cystine bridges form between cysteine 63/cysteine 76, cysteine 96/cysteine 104, and cysteine 99/cysteine 107.

This sequence belongs to the guanylin family.

Its subcellular location is the secreted. In terms of biological role, endogenous activator of intestinal guanylate cyclase. It stimulates this enzyme through the same receptor binding region as the heat-stable enterotoxins. May be a potent physiological regulator of intestinal fluid and electrolyte transport. May be an autocrine/paracrine regulator of intestinal salt and water transport. The protein is Guanylate cyclase activator 2B (GUCA2B) of Notomys alexis (Spinifex hopping mouse).